Here is a 232-residue protein sequence, read N- to C-terminus: Ubiquinone biosynthesis O-methyltransferase (232 aa).

Residues Arg-36, Gly-55, Asp-76, and Leu-120 each coordinate S-adenosyl-L-methionine.

The protein belongs to the methyltransferase superfamily. UbiG/COQ3 family.

The enzyme catalyses a 3-demethylubiquinol + S-adenosyl-L-methionine = a ubiquinol + S-adenosyl-L-homocysteine + H(+). The catalysed reaction is a 3-(all-trans-polyprenyl)benzene-1,2-diol + S-adenosyl-L-methionine = a 2-methoxy-6-(all-trans-polyprenyl)phenol + S-adenosyl-L-homocysteine + H(+). Its pathway is cofactor biosynthesis; ubiquinone biosynthesis. Its function is as follows. O-methyltransferase that catalyzes the 2 O-methylation steps in the ubiquinone biosynthetic pathway. In Pseudomonas putida (strain GB-1), this protein is Ubiquinone biosynthesis O-methyltransferase.